The following is a 761-amino-acid chain: uncharacterized protein (761 aa).

TPR repeat units follow at residues 35–68 (EEGK…SLNS), 69–102 (AQGL…SDVD), 103–136 (DALY…NPNK), 137–170 (VEIL…KPDF), 172–203 (EAEE…KNPN), 204–237 (EEVY…FPHD), 351–384 (LGVL…NPSA), and 419–452 (ASAG…VKEE). The protein sulfotransferase-like stretch occupies residues 487–761 (KRPIFVLGMP…PKGLVGYTVG (275 aa)).

In the C-terminal section; belongs to the protein sulfotransferase family.

This is an uncharacterized protein from Aquifex aeolicus (strain VF5).